Reading from the N-terminus, the 157-residue chain is Protein Smg (157 aa).

It belongs to the Smg family.

This chain is Protein Smg, found in Yersinia pseudotuberculosis serotype O:1b (strain IP 31758).